Consider the following 462-residue polypeptide: Gastric inhibitory polypeptide receptor (462 aa).

Positions methionine 1–glutamine 18 are cleaved as a signal peptide. Residues glutamine 19–glutamine 135 lie on the Extracellular side of the membrane. Disulfide bonds link cysteine 43–cysteine 67, cysteine 58–cysteine 100, and cysteine 81–cysteine 115. N-linked (GlcNAc...) asparagine glycosylation is found at asparagine 59 and asparagine 74. Residues valine 136–leucine 158 form a helical membrane-spanning segment. The Cytoplasmic portion of the chain corresponds to phenylalanine 159 to arginine 166. The chain crosses the membrane as a helical span at residues asparagine 167–threonine 186. Residues arginine 187–arginine 214 are Extracellular-facing. The chain crosses the membrane as a helical span at residues threonine 215–histidine 239. Over histidine 240–glycine 251 the chain is Cytoplasmic. A helical membrane pass occupies residues histidine 252–arginine 275. Residues tyrosine 276–lysine 290 lie on the Extracellular side of the membrane. A helical membrane pass occupies residues alanine 291–glycine 316. Residues isoleucine 317–arginine 338 are Cytoplasmic-facing. Residues serine 339–glutamate 359 traverse the membrane as a helical segment. Residues glutamate 360–glutamate 374 lie on the Extracellular side of the membrane. Residues isoleucine 375–glutamate 395 traverse the membrane as a helical segment. Residues valine 396–cysteine 462 lie on the Cytoplasmic side of the membrane. Positions histidine 421 to cysteine 462 are disordered.

Belongs to the G-protein coupled receptor 2 family. In terms of assembly, may form homodimers and heterodimers with GLP1R. In terms of processing, N-glycosylation is required for cell surface expression and lengthens receptor half-life by preventing degradation in the ER. In terms of tissue distribution, widely distributed including pancreatic islets, brain and various peripheral tissues.

The protein localises to the cell membrane. Functionally, this is a receptor for GIP. The activity of this receptor is mediated by G proteins which activate adenylyl cyclase. This is Gastric inhibitory polypeptide receptor (GIPR) from Mesocricetus auratus (Golden hamster).